Consider the following 275-residue polypeptide: 4-hydroxy-tetrahydrodipicolinate reductase (275 aa).

NAD(+)-binding positions include 13–18 (GAAGKM) and 108–110 (GTT). The active-site Proton donor/acceptor is histidine 164. Histidine 165 provides a ligand contact to (S)-2,3,4,5-tetrahydrodipicolinate. Lysine 168 acts as the Proton donor in catalysis. Residue 174–175 (GT) participates in (S)-2,3,4,5-tetrahydrodipicolinate binding.

It belongs to the DapB family.

It is found in the cytoplasm. It catalyses the reaction (S)-2,3,4,5-tetrahydrodipicolinate + NAD(+) + H2O = (2S,4S)-4-hydroxy-2,3,4,5-tetrahydrodipicolinate + NADH + H(+). The catalysed reaction is (S)-2,3,4,5-tetrahydrodipicolinate + NADP(+) + H2O = (2S,4S)-4-hydroxy-2,3,4,5-tetrahydrodipicolinate + NADPH + H(+). Its pathway is amino-acid biosynthesis; L-lysine biosynthesis via DAP pathway; (S)-tetrahydrodipicolinate from L-aspartate: step 4/4. Its function is as follows. Catalyzes the conversion of 4-hydroxy-tetrahydrodipicolinate (HTPA) to tetrahydrodipicolinate. The chain is 4-hydroxy-tetrahydrodipicolinate reductase from Cyanothece sp. (strain PCC 7425 / ATCC 29141).